We begin with the raw amino-acid sequence, 336 residues long: Glyceraldehyde-3-phosphate dehydrogenase (336 aa).

Residues 12–13 (RI), aspartate 34, and arginine 79 contribute to the NAD(+) site. D-glyceraldehyde 3-phosphate-binding positions include 150-152 (SCT), threonine 181, 210-211 (TG), and arginine 233. The Nucleophile role is filled by cysteine 151. An NAD(+)-binding site is contributed by asparagine 315.

This sequence belongs to the glyceraldehyde-3-phosphate dehydrogenase family. As to quaternary structure, homotetramer.

The protein localises to the cytoplasm. It carries out the reaction D-glyceraldehyde 3-phosphate + phosphate + NAD(+) = (2R)-3-phospho-glyceroyl phosphate + NADH + H(+). It participates in carbohydrate degradation; glycolysis; pyruvate from D-glyceraldehyde 3-phosphate: step 1/5. Functionally, involved in osmoadaptation. This is Glyceraldehyde-3-phosphate dehydrogenase (gpdA) from Emericella nidulans (strain FGSC A4 / ATCC 38163 / CBS 112.46 / NRRL 194 / M139) (Aspergillus nidulans).